The primary structure comprises 163 residues: Phosphopantetheine adenylyltransferase (163 aa).

Residue Ser10 participates in substrate binding. ATP is bound by residues 10–11 (SF) and His18. The substrate site is built by Lys42, Leu74, and Arg88. Residues 89 to 91 (GLR), Glu99, and 124 to 130 (YSFLSSS) each bind ATP.

Belongs to the bacterial CoaD family. As to quaternary structure, homohexamer. Requires Mg(2+) as cofactor.

It is found in the cytoplasm. The enzyme catalyses (R)-4'-phosphopantetheine + ATP + H(+) = 3'-dephospho-CoA + diphosphate. It participates in cofactor biosynthesis; coenzyme A biosynthesis; CoA from (R)-pantothenate: step 4/5. Its function is as follows. Reversibly transfers an adenylyl group from ATP to 4'-phosphopantetheine, yielding dephospho-CoA (dPCoA) and pyrophosphate. This Bacillus mycoides (strain KBAB4) (Bacillus weihenstephanensis) protein is Phosphopantetheine adenylyltransferase.